We begin with the raw amino-acid sequence, 158 residues long: uncharacterized protein (158 aa).

This is an uncharacterized protein from Aedes vexans (Inland floodwater mosquito).